The chain runs to 238 residues: MGSEVWVGTWRPHRPRGPIAALYRGPGPKYKLPTNTGYKLHDPSRPRAPAFSFGSRPPLRHATCGPGPSYLVPARMTVRGTVGSPAFSIYGRLSHTAPVLTPGPGRYYPERARNVTYPSAPRHTIAPRNWGILAKQETPGPGSYTVPSLLGSRVISKVSAPTYSIYSRSPVGSCFEDLSKTPGPCAYHVVNPMIYKTRAPQFTMLGRTLPPRENTKKPGPASYSVDKVVWSRGSRGRG.

Residues 182–207 (PGPCAYHVVNPMIYKTRAPQFTMLGR) form an STPGR repeat. Residues 206–238 (GRTLPPRENTKKPGPASYSVDKVVWSRGSRGRG) are disordered.

This sequence belongs to the CIMAP family.

It is found in the cell projection. Its subcellular location is the cilium. The protein resides in the flagellum. The polypeptide is Ciliary microtubule associated protein 1B (Cimap1b) (Mus musculus (Mouse)).